A 441-amino-acid chain; its full sequence is Chromatin structure-remodeling complex subunit SFH1 (441 aa).

Residues 124–137 show a composition bias toward acidic residues; the sequence is DFDANDFEDDDDDD. 2 disordered regions span residues 124–183 and 383–407; these read DFDA…AAPP and EMTPEEMQKREMERDRSSRRLKRES. 2 stretches are compositionally biased toward basic and acidic residues: residues 138–147 and 155–166; these read QSQRESRDGS and DGTKKEEQDKFA.

This sequence belongs to the SNF5 family.

Its subcellular location is the nucleus. Its function is as follows. Part of the chromatin structure-remodeling complex (RSC) which is involved in transcription regulation and nucleosome positioning. RSC is responsible for the transfer of a histone octamer from a nucleosome core particle to naked DNA. The reaction requires ATP and involves an activated RSC-nucleosome intermediate. Remodeling reaction also involves DNA translocation, DNA twist and conformational change. As a reconfigurer of centromeric and flanking nucleosomes, RSC complex is required both for proper kinetochore function in chromosome segregation and, via a PKC1-dependent signaling pathway, for organization of the cellular cytoskeleton. This subunit is essential for mitotic growth and required for cell cycle progression. The protein is Chromatin structure-remodeling complex subunit SFH1 (SFH1) of Yarrowia lipolytica (strain CLIB 122 / E 150) (Yeast).